Consider the following 307-residue polypeptide: Dof zinc finger protein DOF5.4 (307 aa).

A Dof-type zinc finger spans residues 51-105 (LKCPRCNSLNTKFCYYNNYNLSQPRHFCKNCRRYWTKGGVLRNVPVGGGCRKAKR). Residues C53, C56, C78, and C81 each coordinate Zn(2+). Positions 96–147 (VGGGCRKAKRSKTKQVPSSSSADKPTTTQDDHHVEEKSSTGSHSSSESSSLT) are disordered. The segment covering 109–123 (KQVPSSSSADKPTTT) has biased composition (polar residues). The segment covering 124 to 133 (QDDHHVEEKS) has biased composition (basic and acidic residues). Low complexity predominate over residues 134–147 (STGSHSSSESSSLT).

It localises to the nucleus. In terms of biological role, transcription factor that binds specifically to a 5'-AA[AG]G-3' consensus core sequence. Enhances the DNA binding of OBF transcription factors to OCS elements. This chain is Dof zinc finger protein DOF5.4 (DOF5.4), found in Arabidopsis thaliana (Mouse-ear cress).